Consider the following 406-residue polypeptide: Olfactomedin-like protein 3 (406 aa).

Positions 1 to 21 are cleaved as a signal peptide; that stretch reads MGPSAPLLLFFLLSWPGSLQG. Residues 22-101 are a coiled coil; sequence QQHHLVEYME…REVDYLETQN (80 aa). One can recognise an Olfactomedin-like domain in the interval 134 to 401; that stretch reads DCSYTISQVR…QIVYKLEMKK (268 aa). Cysteine 135 and cysteine 328 are oxidised to a cystine. An N-linked (GlcNAc...) asparagine glycan is attached at asparagine 248.

The protein belongs to the OLFML3 family.

Its subcellular location is the secreted. In terms of biological role, secreted scaffold protein that plays an essential role in dorsoventral patterning during early development. Stabilizes axial formation by restricting chordin (CHRD) activity on the dorsal side. Acts by facilitating the association between the tolloid proteases and their substrate chordin (CHRD), leading to enhance chordin (CHRD) degradation. May have matrix-related function involved in placental and embryonic development, or play a similar role in other physiological processes. The sequence is that of Olfactomedin-like protein 3 (Olfml3) from Rattus norvegicus (Rat).